A 155-amino-acid chain; its full sequence is Small ribosomal subunit protein uS7 (155 aa).

It belongs to the universal ribosomal protein uS7 family. As to quaternary structure, part of the 30S ribosomal subunit. Contacts proteins S9 and S11.

Its function is as follows. One of the primary rRNA binding proteins, it binds directly to 16S rRNA where it nucleates assembly of the head domain of the 30S subunit. Is located at the subunit interface close to the decoding center, probably blocks exit of the E-site tRNA. This chain is Small ribosomal subunit protein uS7, found in Prosthecochloris aestuarii (strain DSM 271 / SK 413).